The sequence spans 541 residues: Chaperonin GroEL 2 (541 aa).

ATP-binding positions include 29–32, 86–90, Gly-413, and Asp-492; these read TLGP and DGTTT.

Belongs to the chaperonin (HSP60) family. As to quaternary structure, forms a cylinder of 14 subunits composed of two heptameric rings stacked back-to-back. Interacts with the co-chaperonin GroES.

The protein localises to the cytoplasm. It catalyses the reaction ATP + H2O + a folded polypeptide = ADP + phosphate + an unfolded polypeptide.. Together with its co-chaperonin GroES, plays an essential role in assisting protein folding. The GroEL-GroES system forms a nano-cage that allows encapsulation of the non-native substrate proteins and provides a physical environment optimized to promote and accelerate protein folding. The polypeptide is Chaperonin GroEL 2 (Nocardia farcinica (strain IFM 10152)).